We begin with the raw amino-acid sequence, 141 residues long: Large ribosomal subunit protein uL11 (141 aa).

This sequence belongs to the universal ribosomal protein uL11 family. In terms of assembly, part of the ribosomal stalk of the 50S ribosomal subunit. Interacts with L10 and the large rRNA to form the base of the stalk. L10 forms an elongated spine to which L12 dimers bind in a sequential fashion forming a multimeric L10(L12)X complex. In terms of processing, one or more lysine residues are methylated.

In terms of biological role, forms part of the ribosomal stalk which helps the ribosome interact with GTP-bound translation factors. The sequence is that of Large ribosomal subunit protein uL11 from Prochlorococcus marinus subsp. pastoris (strain CCMP1986 / NIES-2087 / MED4).